A 694-amino-acid chain; its full sequence is MKFENLLIEIGTEELPPKSLRTLADSFLANFSDELVKADLPFTAATWYAAPRRLALSITGLAVAQADKVVEKRGPAVSSAFDADGNPTKAAQGWARGNGITVEQAERLVTDKGEWLVHQAKVVGVQTNSLIAAMAQRALDKLPIPKPMRWGANSTQFIRPVHTVTMLLGSELIGGELLGIKSDRIIRGHRFMGQASFQLDHADNYLSALKEQGKVLADYQLRKAIIKADAEAAAAKIGGVADIQEDLLEEVASLVEWPIVLTASFEEKFLNVPAEALVYTMKGDQKYFPVFDKSGKLLPNFIFVTNIESKDPQQIISGNEKVVRPRLADAEFFFNTDKKHSLASRLSSLETVVFQKQLGTLKARAERISQLAGFIATELNNNNLASSSVDAARAGLLSKADLMTNMVMEFTDTQGTMGMHYARLDGETEAVAIAIEEQYKPKFSGDTVPTASVSCAVALAEKLDTLVGIFGIGQAPKGAADPFALRRAAIGILRIIVENKLPLDLVDLIAKAQALHGTNLTNGNTSEDVLEFLMARFRSWYQDKGIQVDVILAVLARRPTRPADFDSRVNAVSHFRGLEASTALAAANKRVSNILAKVEGELPANVTPSLLTETAEKALAEQLASLQPKLAPLFATGDYQQALTLLAELRESVDQFFEDVMVMADDEALKNNRLALLNNLREQFLHVADISLLQ.

The protein belongs to the class-II aminoacyl-tRNA synthetase family. In terms of assembly, tetramer of two alpha and two beta subunits.

Its subcellular location is the cytoplasm. The enzyme catalyses tRNA(Gly) + glycine + ATP = glycyl-tRNA(Gly) + AMP + diphosphate. The polypeptide is Glycine--tRNA ligase beta subunit (Shewanella denitrificans (strain OS217 / ATCC BAA-1090 / DSM 15013)).